We begin with the raw amino-acid sequence, 175 residues long: Protein-export protein SecB (175 aa).

The segment at 154-175 is disordered; sequence QQGGNNNGSDSGIILPPGTTRQ.

The protein belongs to the SecB family. As to quaternary structure, homotetramer, a dimer of dimers. One homotetramer interacts with 1 SecA dimer.

The protein resides in the cytoplasm. Its function is as follows. One of the proteins required for the normal export of preproteins out of the cell cytoplasm. It is a molecular chaperone that binds to a subset of precursor proteins, maintaining them in a translocation-competent state. It also specifically binds to its receptor SecA. This is Protein-export protein SecB from Bordetella petrii (strain ATCC BAA-461 / DSM 12804 / CCUG 43448).